Reading from the N-terminus, the 549-residue chain is Probable protein kinase UbiB (549 aa).

The Protein kinase domain occupies 123–501; it reads DFDETPLASA…QQQAHKSNYM (379 aa). ATP contacts are provided by residues 129 to 137 and lysine 152; that span reads LASASISQV. Aspartate 287 (proton acceptor) is an active-site residue. A run of 2 helical transmembrane segments spans residues 499-516 and 521-540; these read NYML…TLLF and TLWS…FIGW.

The protein belongs to the ABC1 family. UbiB subfamily.

It is found in the cell inner membrane. It functions in the pathway cofactor biosynthesis; ubiquinone biosynthesis [regulation]. Its function is as follows. Is probably a protein kinase regulator of UbiI activity which is involved in aerobic coenzyme Q (ubiquinone) biosynthesis. The sequence is that of Probable protein kinase UbiB from Shewanella sp. (strain W3-18-1).